Reading from the N-terminus, the 425-residue chain is Tyrosine--tRNA ligase (425 aa).

Position 37 (Y37) interacts with L-tyrosine. Residues 42-51 (PTADSLHLGH) carry the 'HIGH' region motif. The L-tyrosine site is built by Y175 and Q179. Positions 235–239 (KFGKT) match the 'KMSKS' region motif. K238 is an ATP binding site. The 58-residue stretch at 357–414 (ADLQQALVSAELVPSRGQARTMISSNAVTINGEKQANPEYIFSASDRLFDRYTLLRRG) folds into the S4 RNA-binding domain.

It belongs to the class-I aminoacyl-tRNA synthetase family. TyrS type 1 subfamily. Homodimer.

The protein resides in the cytoplasm. It carries out the reaction tRNA(Tyr) + L-tyrosine + ATP = L-tyrosyl-tRNA(Tyr) + AMP + diphosphate + H(+). In terms of biological role, catalyzes the attachment of tyrosine to tRNA(Tyr) in a two-step reaction: tyrosine is first activated by ATP to form Tyr-AMP and then transferred to the acceptor end of tRNA(Tyr). The chain is Tyrosine--tRNA ligase from Pectobacterium atrosepticum (strain SCRI 1043 / ATCC BAA-672) (Erwinia carotovora subsp. atroseptica).